Consider the following 422-residue polypeptide: Isocitrate dehydrogenase [NADP] (422 aa).

Thr-94 contacts NADP(+). Residues Ser-103, Asn-105, Arg-109, Arg-119, and Arg-143 each contribute to the D-threo-isocitrate site. Asp-310 lines the Mg(2+) pocket. Residues 344 to 350 (HGTAPKY), Asn-357, Tyr-396, and Arg-400 contribute to the NADP(+) site.

It belongs to the isocitrate and isopropylmalate dehydrogenases family. Homodimer. It depends on Mg(2+) as a cofactor. Requires Mn(2+) as cofactor.

It carries out the reaction D-threo-isocitrate + NADP(+) = 2-oxoglutarate + CO2 + NADPH. Catalyzes the oxidative decarboxylation of isocitrate to 2-oxoglutarate and carbon dioxide with the concomitant reduction of NADP(+). The polypeptide is Isocitrate dehydrogenase [NADP] (icd) (Staphylococcus epidermidis (strain ATCC 35984 / DSM 28319 / BCRC 17069 / CCUG 31568 / BM 3577 / RP62A)).